A 643-amino-acid chain; its full sequence is Beta-1,3-galactosyltransferase GALT1 (643 aa).

The Cytoplasmic portion of the chain corresponds to 1–6 (MKRFYG). Residues 7–23 (GLLVVSMCMFLTVYRYV) form a helical; Signal-anchor for type II membrane protein membrane-spanning segment. At 24–643 (DLNTPVEKPY…TKRSLCCREW (620 aa)) the chain is on the lumenal side. N-linked (GlcNAc...) asparagine glycans are attached at residues Asn45, Asn87, Asn144, Asn162, Asn277, Asn287, and Asn508. In terms of domain architecture, Galectin spans 171 to 364 (LKLQIPCGLT…DFRLISILAS (194 aa)).

Belongs to the glycosyltransferase 31 family. Interacts with GMII. It depends on Mn(2+) as a cofactor. As to expression, expressed in stems and siliques.

The protein localises to the golgi apparatus membrane. It participates in protein modification; protein glycosylation. In terms of biological role, beta-1,3-galactosyltransferase that transfers galactose from UDP-galactose to substrates with a terminal beta-N-acetylglucosamine (beta-GlcNAc) residue. Involved in the biosynthesis of N-glycans containing Lewis a structures (with the combination of FUT13). This is Beta-1,3-galactosyltransferase GALT1 from Arabidopsis thaliana (Mouse-ear cress).